Reading from the N-terminus, the 1135-residue chain is Glutamate receptor ionotropic, NMDA 3A (1135 aa).

The N-terminal stretch at 1–23 is a signal peptide; sequence MRRLSLWWLLSRVCLLLPPPCAL. Topologically, residues 24 to 674 are extracellular; that stretch reads VLAGVPSSSS…PIGAFMWPLH (651 aa). The segment at 60–117 is disordered; the sequence is TAPRAASRAQEGGRAGAQRDDPESGTWRPPAPSQGARWLGSALHGRGPPGSRKLGEGA. N-linked (GlcNAc...) asparagine glycans are attached at residues asparagine 145, asparagine 264, asparagine 275, asparagine 285, asparagine 296, asparagine 300, asparagine 426, asparagine 439, asparagine 549, and asparagine 565. 2 cysteine pairs are disulfide-bonded: cysteine 537–cysteine 575 and cysteine 543–cysteine 576. Glycine contacts are provided by serine 631, serine 633, and arginine 638. D-serine-binding residues include serine 633 and arginine 638. Residues 675 to 694 traverse the membrane as a helical segment; the sequence is WTMWLGIFVALHITAIFLTL. The Cytoplasmic portion of the chain corresponds to 695–715; sequence YEWKSPFGMTPKGRNRNKVFS. An intramembrane region (discontinuously helical) is located at residues 716-727; it reads FSSALNVCYALL. Residues 728-741 lie on the Cytoplasmic side of the membrane; sequence FGRTAAIKPPKCWT. A helical transmembrane segment spans residues 742–761; the sequence is GRFLMNLWAIFCMFCLSTYT. Residues 762-932 are Extracellular-facing; the sequence is ANLAAVMVGE…TLQMGIKHFS (171 aa). Serine 801 is a glycine binding site. 3 residues coordinate D-serine: serine 801, alanine 802, and aspartate 845. Position 845 (aspartate 845) interacts with glycine. The cysteines at positions 859 and 913 are disulfide-linked. N-linked (GlcNAc...) asparagine glycosylation is present at asparagine 886. A helical transmembrane segment spans residues 933 to 948; the sequence is GLFVLLCIGFGLSILT. The Cytoplasmic portion of the chain corresponds to 949-1135; sequence TIGEHIVHRL…YQKTNRTCES (187 aa). Residues 951–987 are PPP2CB binding site; that stretch reads GEHIVHRLLLPRIKNKSKLQYWLHTSQRFHRALNTSF. Residues 1080–1129 adopt a coiled-coil conformation; sequence TTNGKADSLNVTRSSVIQELSELEKQIQVIRQELQLAVSRKTELEEYQKT. The tract at residues 1082 to 1115 is GIT1-binding; it reads NGKADSLNVTRSSVIQELSELEKQIQVIRQELQL.

Belongs to the glutamate-gated ion channel (TC 1.A.10.1) family. NR3A/GRIN3A subfamily. Heterotetramer. Forms heterotetrameric channels composed of two GluN1/zeta subunits (GRIN1), and two identical GluN3 subunits (GRIN3A or GRIN3B) (in vitro). Can also form heterotetrameric channels that contain at least two GluN1 subunits and at least a combination of one GluN2 and one GluN3 subunits (in vitro). Does not form functional homomeric channels. Found in a complex with GRIN1, GRIN2A or GRIN2B and PPP2CB. Probably interacts with PPP2CB. No complex with PPP2CB is detected when NMDARs are stimulated by NMDA. Interacts (via C-terminus) with GIT1, but not with GRIA1/GluA1, nor with synaptophysin/SYP; this interaction competes with GIT1 interaction with ARHGEF7/beta-PIX. In terms of processing, N-glycosylated. In terms of tissue distribution, isoform 1 and isoform 2 are expressed in olfactory bulb, frontal occipital, entorhinal and pyriform cortices, hippocampus, striatum, thalamus, cerebellum and spinal cord.

It is found in the cell membrane. The protein resides in the postsynaptic cell membrane. It localises to the postsynaptic density. The enzyme catalyses Ca(2+)(in) = Ca(2+)(out). It catalyses the reaction Na(+)(in) = Na(+)(out). Excitatory glycine receptors are inhibited by D-serine at a concentrion of 10uM. Component of a non-conventional N-methyl-D-aspartate (NMDA) receptors (NMDARs) that function as heterotetrameric, ligand-gated cation channels with low calcium permeability and low voltage-dependent block by Mg(2+). During the development of neural circuits, participates in the synaptic refinement period, restricting spine maturation and growth. Forms glutamatergic receptor complexes with GluN1 and GluN2 subunits which are activated by glycine binding to the GluN1 and GluN3 subunits and L-glutamate binding to GluN2 subunits. Forms excitatory glycinergic receptor complexes with GluN1 alone which are activated by glycine binding to the GluN1 and GluN3 subunits. GluN3A subunit also binds D-serine. Each GluN3 subunit confers differential attributes to channel properties, including activation, deactivation and desensitization kinetics, pH sensitivity, Ca2(+) permeability, and binding to allosteric modulators. By competing with GIT1 interaction with ARHGEF7/beta-PIX, may reduce GIT1/ARHGEF7-regulated local activation of RAC1, hence affecting signaling and limiting the maturation and growth of inactive synapses. This is Glutamate receptor ionotropic, NMDA 3A from Rattus norvegicus (Rat).